The primary structure comprises 135 residues: D-ribose pyranase (135 aa).

The active-site Proton donor is the H20. Substrate is bound by residues D28, H102, and 124 to 126; that span reads YAN.

Belongs to the RbsD / FucU family. RbsD subfamily. As to quaternary structure, homodecamer.

The protein localises to the cytoplasm. The enzyme catalyses beta-D-ribopyranose = beta-D-ribofuranose. The protein operates within carbohydrate metabolism; D-ribose degradation; D-ribose 5-phosphate from beta-D-ribopyranose: step 1/2. Catalyzes the interconversion of beta-pyran and beta-furan forms of D-ribose. This chain is D-ribose pyranase, found in Rhodopirellula baltica (strain DSM 10527 / NCIMB 13988 / SH1).